The chain runs to 347 residues: tRNA N6-adenosine threonylcarbamoyltransferase (347 aa).

Fe cation contacts are provided by His-111 and His-115. Substrate-binding positions include 134 to 138 (LVSGG), Asp-167, Gly-180, and Asn-277. Fe cation is bound at residue Asp-305.

The protein belongs to the KAE1 / TsaD family. The cofactor is Fe(2+).

The protein resides in the cytoplasm. The catalysed reaction is L-threonylcarbamoyladenylate + adenosine(37) in tRNA = N(6)-L-threonylcarbamoyladenosine(37) in tRNA + AMP + H(+). In terms of biological role, required for the formation of a threonylcarbamoyl group on adenosine at position 37 (t(6)A37) in tRNAs that read codons beginning with adenine. Is involved in the transfer of the threonylcarbamoyl moiety of threonylcarbamoyl-AMP (TC-AMP) to the N6 group of A37, together with TsaE and TsaB. TsaD likely plays a direct catalytic role in this reaction. The chain is tRNA N6-adenosine threonylcarbamoyltransferase from Ralstonia pickettii (strain 12J).